Reading from the N-terminus, the 89-residue chain is Small ribosomal subunit protein uS15 (89 aa).

It belongs to the universal ribosomal protein uS15 family. Part of the 30S ribosomal subunit. Forms a bridge to the 50S subunit in the 70S ribosome, contacting the 23S rRNA.

Functionally, one of the primary rRNA binding proteins, it binds directly to 16S rRNA where it helps nucleate assembly of the platform of the 30S subunit by binding and bridging several RNA helices of the 16S rRNA. Its function is as follows. Forms an intersubunit bridge (bridge B4) with the 23S rRNA of the 50S subunit in the ribosome. This is Small ribosomal subunit protein uS15 from Bacillus anthracis (strain CDC 684 / NRRL 3495).